A 189-amino-acid chain; its full sequence is Thymidine kinase (189 aa).

Residues 9–16 (GTMNSGKT) and 85–88 (DESQ) contribute to the ATP site. The active-site Proton acceptor is the E86. Zn(2+) is bound by residues C143, C146, C180, and H183.

Belongs to the thymidine kinase family. In terms of assembly, homotetramer.

Its subcellular location is the cytoplasm. It catalyses the reaction thymidine + ATP = dTMP + ADP + H(+). In Streptococcus pyogenes serotype M1, this protein is Thymidine kinase.